We begin with the raw amino-acid sequence, 240 residues long: Tetrahydromethanopterin S-methyltransferase subunit A (240 aa).

Residues 1 to 218 lie on the Cytoplasmic side of the membrane; that stretch reads MADKREPAPG…KFHSGVHAGK (218 aa). 5-hydroxybenzimidazolylcob(I)amide is bound at residue H85. The helical transmembrane segment at 219 to 239 threads the bilayer; it reads VEGAMIGLTITISLLGLLLLG. A topological domain (extracellular) is located at residue R240.

This sequence belongs to the MtrA family. As to quaternary structure, the complex is composed of 8 subunits; MtrA, MtrB, MtrC, MtrD, MtrE, MtrF, MtrG and MtrH. 5-hydroxybenzimidazolylcob(I)amide is required as a cofactor.

It localises to the cell membrane. It carries out the reaction 5-methyl-5,6,7,8-tetrahydromethanopterin + coenzyme M + 2 Na(+)(in) = 5,6,7,8-tetrahydromethanopterin + methyl-coenzyme M + 2 Na(+)(out). The protein operates within one-carbon metabolism; methanogenesis from CO(2); methyl-coenzyme M from 5,10-methylene-5,6,7,8-tetrahydromethanopterin: step 2/2. In terms of biological role, part of a complex that catalyzes the formation of methyl-coenzyme M and tetrahydromethanopterin from coenzyme M and methyl-tetrahydromethanopterin. This is an energy-conserving, sodium-ion translocating step. The polypeptide is Tetrahydromethanopterin S-methyltransferase subunit A (Methanosarcina mazei (strain ATCC BAA-159 / DSM 3647 / Goe1 / Go1 / JCM 11833 / OCM 88) (Methanosarcina frisia)).